The chain runs to 412 residues: Maintenance of mitochondrial morphology protein 1 (412 aa).

The Lumenal segment spans residues 1–81 (MTKELIKTEA…PANNWTFTQG (81 aa)). Residues 82–102 (LVLGQISVIFIIIVFVKFFVF) traverse the membrane as a helical segment. Residues 103 to 412 (ADSSTIPTKK…RSDSGTSENL (310 aa)) are Cytoplasmic-facing. The SMP-LTD domain occupies 165–382 (SPESLDWFNV…EPRFQVVRLP (218 aa)). The interval 389 to 412 (KNTREPINKKTSVSRSDSGTSENL) is disordered. A compositionally biased stretch (polar residues) spans 397–412 (KKTSVSRSDSGTSENL).

Belongs to the MMM1 family. Homodimer. Component of the ER-mitochondria encounter structure (ERMES) or MDM complex, composed of MMM1, MDM10, MDM12 and MDM34. An MMM1 homodimer associates with one molecule of MDM12 on each side in a pairwise head-to-tail manner, and the SMP-LTD domains of MMM1 and MDM12 generate a continuous hydrophobic tunnel for phospholipid trafficking.

It localises to the endoplasmic reticulum membrane. Component of the ERMES/MDM complex, which serves as a molecular tether to connect the endoplasmic reticulum (ER) and mitochondria. Components of this complex are involved in the control of mitochondrial shape and protein biogenesis, and function in nonvesicular lipid trafficking between the ER and mitochondria. The MDM12-MMM1 subcomplex functions in the major beta-barrel assembly pathway that is responsible for biogenesis of all outer membrane beta-barrel proteins, and acts in a late step after the SAM complex. The MDM10-MDM12-MMM1 subcomplex further acts in the TOM40-specific pathway after the action of the MDM12-MMM1 complex. Essential for establishing and maintaining the structure of mitochondria and maintenance of mtDNA nucleoids. This Candida tropicalis (strain ATCC MYA-3404 / T1) (Yeast) protein is Maintenance of mitochondrial morphology protein 1.